The chain runs to 366 residues: Ferrochelatase (366 aa).

Residues histidine 209 and glutamate 290 each contribute to the Fe cation site.

It belongs to the ferrochelatase family.

The protein resides in the cytoplasm. It catalyses the reaction heme b + 2 H(+) = protoporphyrin IX + Fe(2+). The protein operates within porphyrin-containing compound metabolism; protoheme biosynthesis; protoheme from protoporphyrin-IX: step 1/1. Its function is as follows. Catalyzes the ferrous insertion into protoporphyrin IX. This chain is Ferrochelatase, found in Teredinibacter turnerae (strain ATCC 39867 / T7901).